Consider the following 313-residue polypeptide: Intracellular endo-alpha-(1-&gt;5)-L-arabinanase (313 aa).

Aspartate 27 serves as the catalytic Proton acceptor. Substrate-binding positions include aspartate 27, glycine 105, 144 to 147 (NAID), and 164 to 166 (SFW). Glutamate 201 serves as the catalytic Proton donor. Histidine 271 contacts Ca(2+).

The protein belongs to the glycosyl hydrolase 43 family. Monomer. The cofactor is Ca(2+).

The protein localises to the cytoplasm. The enzyme catalyses Endohydrolysis of (1-&gt;5)-alpha-arabinofuranosidic linkages in (1-&gt;5)-arabinans.. The protein operates within glycan metabolism; L-arabinan degradation. Involved in the degradation of arabinan and is a key enzyme in the complete degradation of the plant cell wall. Catalyzes the cleavage of endo alpha-(1-&gt;5)-L-arabinofuranosyl residues in debranched arabinan. This Geobacillus thermodenitrificans protein is Intracellular endo-alpha-(1-&gt;5)-L-arabinanase (abn-ts).